The following is a 221-amino-acid chain: GTP cyclohydrolase 1 (221 aa).

Positions 109, 112, and 180 each coordinate Zn(2+).

This sequence belongs to the GTP cyclohydrolase I family. In terms of assembly, toroid-shaped homodecamer, composed of two pentamers of five dimers.

The enzyme catalyses GTP + H2O = 7,8-dihydroneopterin 3'-triphosphate + formate + H(+). It functions in the pathway cofactor biosynthesis; 7,8-dihydroneopterin triphosphate biosynthesis; 7,8-dihydroneopterin triphosphate from GTP: step 1/1. The protein is GTP cyclohydrolase 1 of Sodalis glossinidius (strain morsitans).